A 238-amino-acid chain; its full sequence is MRPAGRSANQVRPVTLTRNYTKHAEGSVLVEFGDTKVLCTASIEEGVPRFLKGQGQGWITAEYGMLPRATHTRNAREAAKGKQGGRTMEIQRLIARALRAAVDLKTLGEFTITLDCDVVQADGGTRTASITGACVALADALNKLVANGKLKTNPMKGMVAAVSVGIVNGEAICDLEYVEDSAAETDMNVVMTEDGRIIEVQGTAEGEPFSHEELLTLLALARGGIESIVATQKAALEN.

Phosphate is bound by residues R86 and 124-126 (GTR).

This sequence belongs to the RNase PH family. In terms of assembly, homohexameric ring arranged as a trimer of dimers.

It carries out the reaction tRNA(n+1) + phosphate = tRNA(n) + a ribonucleoside 5'-diphosphate. In terms of biological role, phosphorolytic 3'-5' exoribonuclease that plays an important role in tRNA 3'-end maturation. Removes nucleotide residues following the 3'-CCA terminus of tRNAs; can also add nucleotides to the ends of RNA molecules by using nucleoside diphosphates as substrates, but this may not be physiologically important. Probably plays a role in initiation of 16S rRNA degradation (leading to ribosome degradation) during starvation. This chain is Ribonuclease PH, found in Salmonella choleraesuis (strain SC-B67).